We begin with the raw amino-acid sequence, 422 residues long: Enolase (422 aa).

Gln-162 serves as a coordination point for (2R)-2-phosphoglycerate. The Proton donor role is filled by Glu-204. Residues Asp-241, Glu-284, and Asp-311 each contribute to the Mg(2+) site. (2R)-2-phosphoglycerate-binding residues include Lys-336, Arg-365, Ser-366, and Lys-387. Residue Lys-336 is the Proton acceptor of the active site.

Belongs to the enolase family. Component of the RNA degradosome, a multiprotein complex involved in RNA processing and mRNA degradation. Mg(2+) is required as a cofactor.

It localises to the cytoplasm. Its subcellular location is the secreted. It is found in the cell surface. The catalysed reaction is (2R)-2-phosphoglycerate = phosphoenolpyruvate + H2O. Its pathway is carbohydrate degradation; glycolysis; pyruvate from D-glyceraldehyde 3-phosphate: step 4/5. Catalyzes the reversible conversion of 2-phosphoglycerate (2-PG) into phosphoenolpyruvate (PEP). It is essential for the degradation of carbohydrates via glycolysis. In Legionella pneumophila (strain Lens), this protein is Enolase.